Reading from the N-terminus, the 320-residue chain is MIHYGNCNKICEKTVMNQRTIKTAIAVTGTGLHSGQPVDLEFHPQPIDTGIVFERSDITGSTPIPASAFLVQDTMMSSNLVFGGTRVGTVEHLLSAIAGLGVDNLLIRVSASEIPIMDGSAAPFVGLLLQAGFCEQDASKKFIRIVRTVRVKVDDKWAELRPYNGFELNFEIDFDHPAIDKNFQHAQLQFSTQNFIERLSSARTFGFLRDIEAMRQNNLALGGSMDNAIVIDESNILNEEGLRFNDEFVRHKILDALGDLYLIGYPILGRFNAYKSGHALNNLLVREILSDHNNFEIVTFDDNVTCPIEYLPLNGITVEG.

Histidine 92, histidine 251, and aspartate 255 together coordinate Zn(2+). The active-site Proton donor is histidine 278.

This sequence belongs to the LpxC family. Zn(2+) is required as a cofactor.

The enzyme catalyses a UDP-3-O-[(3R)-3-hydroxyacyl]-N-acetyl-alpha-D-glucosamine + H2O = a UDP-3-O-[(3R)-3-hydroxyacyl]-alpha-D-glucosamine + acetate. It participates in glycolipid biosynthesis; lipid IV(A) biosynthesis; lipid IV(A) from (3R)-3-hydroxytetradecanoyl-[acyl-carrier-protein] and UDP-N-acetyl-alpha-D-glucosamine: step 2/6. In terms of biological role, catalyzes the hydrolysis of UDP-3-O-myristoyl-N-acetylglucosamine to form UDP-3-O-myristoylglucosamine and acetate, the committed step in lipid A biosynthesis. In Psychrobacter cryohalolentis (strain ATCC BAA-1226 / DSM 17306 / VKM B-2378 / K5), this protein is UDP-3-O-acyl-N-acetylglucosamine deacetylase.